The following is an 89-amino-acid chain: MSEDTRNSRKVIQGRVVSDKMDKTIVVIVETYKNHPVYGKRVRYSKKFKAHDEKNEAKTGDIVKIMETRPLSATKRFRLIEVVQKAVII.

It belongs to the universal ribosomal protein uS17 family. Part of the 30S ribosomal subunit.

One of the primary rRNA binding proteins, it binds specifically to the 5'-end of 16S ribosomal RNA. The sequence is that of Small ribosomal subunit protein uS17 from Lactiplantibacillus plantarum (strain ATCC BAA-793 / NCIMB 8826 / WCFS1) (Lactobacillus plantarum).